Here is an 847-residue protein sequence, read N- to C-terminus: GPMGPSGPRGIPGPPGSPGPQGFQGPPGEPGEPGSSGPMGPRGPPGPPGKNGDDGEAGKPGRPGERGPSGPQGPRPGMKGHRGFSGIDGAKGDAGPAGPKGEPGSPGENGAPGQMGPRGIPGERGRPGASGPAGARGNDGATGAAGPPGPTGPAGPPGFPGAVGAKGEAGPQGARGSEGPQGVRGEPGPPGPAGAAGPAGNPGADGQPGAKGAGPSGPQGPSGAPGPKGNSGEPGAPGNKGEPGPTGIQGPPGPAGEEGKRGAGEPGPTGIPGPPGERGFPGADGVAGPKGSPGPAGPKGITGSPGSPGPDGKTGPPGPAGQDGRGQAGVMGFPGPKGAAGEPGKAGERGVPGPPGAAGPAGKDGEAGAQGPPGPAGPAGERGEQGPAGSPGFQGPAGPPGEAGKDIGAPGPSGARGERGFPGERGVQGPPGPAGPRGSNGAPGNDGAKIQGMPGERGAAGIPGPKGDRGDSGPKGAGITGPIGPPGPAGATGDKGETGPSGPAGPTGARGPPGPAGFAGPPGADGQPGAKGEPGDAGAKGDAGPPGPAGPTGAPGPIGNIGAPGPKGARGSAGPPGATGFPGAAGRVGPPGPSGNAGAPGPPGPAGKEGGKGPRGETGPAGRGEKGSPGADGPAGAPGTPGPQGISGQRGVVGIPGQRGFPGIPGPSGEPGKQGPSGSSGERGPPGPMGPPGIAGPPGESGREGSPGAEGSPGRDGSPGPKGDRGETGPSGPPGAPGAPGAPGPVGPAGKGETGPAGPAGPAGPAGARGPSGPQGPRGDKGETGEQGDRGFSGIQGPPGAPGSPGEQGPSGASGPAGPRGPPGSAGSPGKDGINGIPGPIGPPGPR.

Positions 1–847 (GPMGPSGPRG…PGPIGPPGPR (847 aa)) are disordered. Residues 20-39 (PQGFQGPPGEPGEPGSSGPM) are compositionally biased toward low complexity. Residues 51 to 65 (NGDDGEAGKPGRPGE) are compositionally biased toward basic and acidic residues. Phosphoserine is present on Ser85. Composition is skewed to low complexity over residues 93–109 (DAGPAGPKGEPGSPGEN) and 127–145 (PGASGPAGARGNDGATGAA). The segment covering 147 to 159 (PPGPTGPAGPPGF) has biased composition (pro residues). 7 stretches are compositionally biased toward low complexity: residues 193-208 (AGAAGPAGNPGADGQP), 219-228 (QGPSGAPGPK), 298-314 (PKGITGSPGSPGPDGKT), 334-343 (PGPKGAAGEP), 500-543 (PSGP…KGDA), 551-599 (PTGA…NAGA), and 628-638 (SPGADGPAGAP). Ser501 carries the phosphoserine modification. Residues 685-695 (PPGPMGPPGIA) are compositionally biased toward pro residues. The span at 697 to 712 (PPGESGREGSPGAEGS) shows a compositional bias: low complexity. The segment covering 731–746 (SGPPGAPGAPGAPGPV) has biased composition (pro residues). The span at 763–777 (AGPAGARGPSGPQGP) shows a compositional bias: low complexity. The segment covering 778-789 (RGDKGETGEQGD) has biased composition (basic and acidic residues). Residues 793–838 (SGIQGPPGAPGSPGEQGPSGASGPAGPRGPPGSAGSPGKDGINGIP) are compositionally biased toward low complexity.

This sequence belongs to the fibrillar collagen family. As to quaternary structure, trimers of one alpha 2(I) and two alpha 1(I) chains. In terms of processing, prolines at the third position of the tripeptide repeating unit (G-X-Y) are hydroxylated in some or all of the chains. As to expression, forms the fibrils of tendon, ligaments and bones. In bones, the fibrils are mineralized with calcium hydroxyapatite.

Its subcellular location is the secreted. It is found in the extracellular space. The protein resides in the extracellular matrix. Functionally, type I collagen is a member of group I collagen (fibrillar forming collagen). The polypeptide is Collagen alpha-1(I) chain (Cyclopes didactylus (Silky anteater)).